Reading from the N-terminus, the 366-residue chain is Ribonuclease P protein subunit drpp30 (366 aa).

The tract at residues 265-366 (EDTQPTNNNI…DIDNNKRKRE (102 aa)) is disordered. Basic and acidic residues predominate over residues 275-290 (PHEKHINKESTGKETI). 2 stretches are compositionally biased toward low complexity: residues 291–324 (PKPT…TPSI) and 333–351 (TAKS…AQKQ). Residues 352–366 (GKMDIDIDNNKRKRE) are compositionally biased toward basic and acidic residues.

Belongs to the eukaryotic/archaeal RNase P protein component 3 family.

It localises to the nucleus. The catalysed reaction is Endonucleolytic cleavage of RNA, removing 5'-extranucleotides from tRNA precursor.. Its function is as follows. Component of ribonuclease P, a protein complex that generates mature tRNA molecules by cleaving their 5'-ends. This is Ribonuclease P protein subunit drpp30 (drpp30) from Dictyostelium discoideum (Social amoeba).